The primary structure comprises 456 residues: Kynurenine 3-monooxygenase (456 aa).

The protein belongs to the aromatic-ring hydroxylase family. KMO subfamily. FAD is required as a cofactor.

It catalyses the reaction L-kynurenine + NADPH + O2 + H(+) = 3-hydroxy-L-kynurenine + NADP(+) + H2O. Its pathway is cofactor biosynthesis; NAD(+) biosynthesis; quinolinate from L-kynurenine: step 1/3. Its function is as follows. Catalyzes the hydroxylation of L-kynurenine (L-Kyn) to form 3-hydroxy-L-kynurenine (L-3OHKyn). Required for synthesis of quinolinic acid. This is Kynurenine 3-monooxygenase from Xanthomonas campestris pv. campestris (strain 8004).